The chain runs to 552 residues: ATP synthase subunit alpha (552 aa).

An ATP-binding site is contributed by 173–180; that stretch reads GDRQTGKT. The segment at 516–552 is disordered; that stretch reads DGKPLVNEPAPSPLDPGLVRQESIPVHRPAARKDDEG.

The protein belongs to the ATPase alpha/beta chains family. F-type ATPases have 2 components, CF(1) - the catalytic core - and CF(0) - the membrane proton channel. CF(1) has five subunits: alpha(3), beta(3), gamma(1), delta(1), epsilon(1). CF(0) has three main subunits: a(1), b(2) and c(9-12). The alpha and beta chains form an alternating ring which encloses part of the gamma chain. CF(1) is attached to CF(0) by a central stalk formed by the gamma and epsilon chains, while a peripheral stalk is formed by the delta and b chains.

Its subcellular location is the cell membrane. It carries out the reaction ATP + H2O + 4 H(+)(in) = ADP + phosphate + 5 H(+)(out). Produces ATP from ADP in the presence of a proton gradient across the membrane. The alpha chain is a regulatory subunit. This chain is ATP synthase subunit alpha, found in Frankia casuarinae (strain DSM 45818 / CECT 9043 / HFP020203 / CcI3).